A 660-amino-acid polypeptide reads, in one-letter code: UvrABC system protein C (660 aa).

A GIY-YIG domain is found at 16-95 (ESPGVYRFRD…IKQYDPRFNV (80 aa)). In terms of domain architecture, UVR spans 208–243 (DAMVRRLEREMAEASAELEFERAARLRDDLAALRRA). Positions 469–501 (GEAGVESAGDPDAPAGPDAPDEPRVGTLVDPTT) are disordered. A compositionally biased stretch (low complexity) spans 476 to 486 (AGDPDAPAGPD).

The protein belongs to the UvrC family. Interacts with UvrB in an incision complex.

The protein resides in the cytoplasm. The UvrABC repair system catalyzes the recognition and processing of DNA lesions. UvrC both incises the 5' and 3' sides of the lesion. The N-terminal half is responsible for the 3' incision and the C-terminal half is responsible for the 5' incision. This is UvrABC system protein C from Salinispora arenicola (strain CNS-205).